The chain runs to 189 residues: EFLFARTMIGVFKNIEYMCNRTSSKTWGKEAWKKIVVCIVSDGRAKINTRTRAVLAGLGVYQDGIAKQQVNGKDVTAHIYEYTTQVGLELKGTQVSLKPRSATPVQLLFCLKEKNQKKINSHRWFFQAFGRVLDPNICVLIDAGTKPGKDSIYQLWKAFDLEPMCGGACGEIKVMLDHGKKLYNPLIAT.

Belongs to the chitin synthase family.

The protein resides in the cell membrane. The enzyme catalyses [(1-&gt;4)-N-acetyl-beta-D-glucosaminyl](n) + UDP-N-acetyl-alpha-D-glucosamine = [(1-&gt;4)-N-acetyl-beta-D-glucosaminyl](n+1) + UDP + H(+). In terms of biological role, polymerizes chitin, a structural polymer of the cell wall and septum, by transferring the sugar moiety of UDP-GlcNAc to the non-reducing end of the growing chitin polymer. This is Chitin synthase 1 (CHS1) from Exophiala exophialae (Black yeast-like fungus).